A 554-amino-acid polypeptide reads, in one-letter code: Probable efflux pump gsfJ (554 aa).

14 helical membrane-spanning segments follow: residues 54–74 (LAAV…DNTI), 93–115 (SWYG…GKFY), 120–140 (IKVW…ICAV), 152–172 (AIAG…IGFA), 181–201 (LLGF…LIGG), 206–226 (KCFY…FLLF), 248–268 (LVGA…LQYG), 279–299 (VIGL…WEIY), 321–341 (IYMF…PIYF), 349–369 (PIGS…AAIV), 379–399 (IVPL…GLFY), 410–430 (WVGY…IAMS), 447–467 (IVNF…QCAF), and 518–538 (VFAI…FGSW).

It belongs to the major facilitator superfamily.

It localises to the membrane. In terms of biological role, probable efflux pump; part of the gene cluster that mediates the biosynthesis of griseofulvin. The protein is Probable efflux pump gsfJ of Penicillium aethiopicum.